The sequence spans 102 residues: Large ribosomal subunit protein bL21 (102 aa).

Basic residues predominate over residues 79 to 91 (RKDSKRKKGHRQP). The segment at 79–102 (RKDSKRKKGHRQPYTKLTIDKINA) is disordered.

The protein belongs to the bacterial ribosomal protein bL21 family. Part of the 50S ribosomal subunit. Contacts protein L20.

Its function is as follows. This protein binds to 23S rRNA in the presence of protein L20. The sequence is that of Large ribosomal subunit protein bL21 from Staphylococcus saprophyticus subsp. saprophyticus (strain ATCC 15305 / DSM 20229 / NCIMB 8711 / NCTC 7292 / S-41).